The chain runs to 359 residues: DNA replication and repair protein RecF (359 aa).

30-37 (GPNGSGKT) provides a ligand contact to ATP.

This sequence belongs to the RecF family.

It is found in the cytoplasm. In terms of biological role, the RecF protein is involved in DNA metabolism; it is required for DNA replication and normal SOS inducibility. RecF binds preferentially to single-stranded, linear DNA. It also seems to bind ATP. The polypeptide is DNA replication and repair protein RecF (Aliivibrio fischeri (strain ATCC 700601 / ES114) (Vibrio fischeri)).